The sequence spans 459 residues: Ribulose bisphosphate carboxylase (459 aa).

Asparagine 111 is a binding site for substrate. Lysine 166 (proton acceptor) is an active-site residue. Substrate is bound at residue lysine 168. Mg(2+) is bound by residues lysine 191, aspartate 193, and glutamate 194. An N6-carboxylysine modification is found at lysine 191. Histidine 287 (proton acceptor) is an active-site residue. Arginine 288, histidine 321, and serine 368 together coordinate substrate.

This sequence belongs to the RuBisCO large chain family. Type II subfamily. As to quaternary structure, homodimer. Mg(2+) is required as a cofactor.

It carries out the reaction 2 (2R)-3-phosphoglycerate + 2 H(+) = D-ribulose 1,5-bisphosphate + CO2 + H2O. The catalysed reaction is D-ribulose 1,5-bisphosphate + O2 = 2-phosphoglycolate + (2R)-3-phosphoglycerate + 2 H(+). In terms of biological role, ruBisCO catalyzes two reactions: the carboxylation of D-ribulose 1,5-bisphosphate, the primary event in carbon dioxide fixation, as well as the oxidative fragmentation of the pentose substrate. Both reactions occur simultaneously and in competition at the same active site. The sequence is that of Ribulose bisphosphate carboxylase from Polaromonas naphthalenivorans (strain CJ2).